The primary structure comprises 214 residues: Large ribosomal subunit protein uL3 (214 aa).

Positions 131-153 (KSQRASHGNSRSHNVPGSIGMAQ) are disordered. The span at 132–145 (SQRASHGNSRSHNV) shows a compositional bias: polar residues. An N5-methylglutamine modification is found at Gln-153.

It belongs to the universal ribosomal protein uL3 family. In terms of assembly, part of the 50S ribosomal subunit. Forms a cluster with proteins L14 and L19. Methylated by PrmB.

Its function is as follows. One of the primary rRNA binding proteins, it binds directly near the 3'-end of the 23S rRNA, where it nucleates assembly of the 50S subunit. This Thiobacillus denitrificans (strain ATCC 25259 / T1) protein is Large ribosomal subunit protein uL3.